The following is a 259-amino-acid chain: Imidazole glycerol phosphate synthase subunit HisF (259 aa).

Residues Asp11 and Asp130 contribute to the active site.

Belongs to the HisA/HisF family. In terms of assembly, heterodimer of HisH and HisF.

The protein localises to the cytoplasm. It catalyses the reaction 5-[(5-phospho-1-deoxy-D-ribulos-1-ylimino)methylamino]-1-(5-phospho-beta-D-ribosyl)imidazole-4-carboxamide + L-glutamine = D-erythro-1-(imidazol-4-yl)glycerol 3-phosphate + 5-amino-1-(5-phospho-beta-D-ribosyl)imidazole-4-carboxamide + L-glutamate + H(+). The protein operates within amino-acid biosynthesis; L-histidine biosynthesis; L-histidine from 5-phospho-alpha-D-ribose 1-diphosphate: step 5/9. Functionally, IGPS catalyzes the conversion of PRFAR and glutamine to IGP, AICAR and glutamate. The HisF subunit catalyzes the cyclization activity that produces IGP and AICAR from PRFAR using the ammonia provided by the HisH subunit. This is Imidazole glycerol phosphate synthase subunit HisF from Desulforapulum autotrophicum (strain ATCC 43914 / DSM 3382 / VKM B-1955 / HRM2) (Desulfobacterium autotrophicum).